A 323-amino-acid chain; its full sequence is MEDGPVFYGFKNIFITMFATFFFFKLLIKVFLALLTHFYIVKGNRKEAARIAEEIYGGISDCWADRSPLHEAAAQGRLLALKTLIAQGVNVNLVTINRVSSLHEACLGGHVACAKALLENGAHVNGVTVHGATPLFNACCSGSAACVNVLLEFGAKAQLEVHLASPIHEAVKRGHRECMEILLANNVNIDHEVPQLGTPLYVACTYQRVDCVKKLLELGASVDHGQWLDTPLHAAARQSNVEVIHLLTDYGANLKRRNAQGKSALDLAAPKSSVEQALLLREGPPALSQLCRLCVRKCLGRACHQAIHKLHLPEPLERFLLYQ.

ANK repeat units lie at residues 64–93 (ADRSPLHEAAAQGRLLALKTLIAQGVNVNL), 97–126 (NRVSSLHEACLGGHVACAKALLENGAHVNG), 130–159 (HGATPLFNACCSGSAACVNVLLEFGAKAQL), 162–191 (HLASPIHEAVKRGHRECMEILLANNVNIDH), 195–224 (QLGTPLYVACTYQRVDCVKKLLELGASVDH), and 227–256 (WLDTPLHAAARQSNVEVIHLLTDYGANLKR). Positions 273–323 (SVEQALLLREGPPALSQLCRLCVRKCLGRACHQAIHKLHLPEPLERFLLYQ) constitute an SOCS box domain.

Belongs to the ankyrin SOCS box (ASB) family. In terms of assembly, substrate-recognition component of the ECS(ASB11) complex, composed of ASB11, CUL5, ELOB, ELOC and RNF7/RBX2.

It is found in the endoplasmic reticulum. Its pathway is protein modification; protein ubiquitination. Substrate-recognition component of a cullin-5-RING E3 ubiquitin-protein ligase complex (ECS complex, also named CRL5 complex), which mediates the ubiquitination and subsequent proteasomal degradation of target proteins, such as BIK, DIRAS2 and RPN1. The ECS(ASB11) complex acts as a regulator of the endoplasmic reticulum unfolded protein response by mediating ubiquitination and degradation of BIK. The chain is Ankyrin repeat and SOCS box protein 11 from Homo sapiens (Human).